Here is a 397-residue protein sequence, read N- to C-terminus: Mannonate dehydratase 2 (397 aa).

Belongs to the mannonate dehydratase family. The cofactor is Fe(2+). Mn(2+) is required as a cofactor.

The enzyme catalyses D-mannonate = 2-dehydro-3-deoxy-D-gluconate + H2O. The protein operates within carbohydrate metabolism; pentose and glucuronate interconversion. Its function is as follows. Catalyzes the dehydration of D-mannonate. This is Mannonate dehydratase 2 (uxuA2) from Agrobacterium fabrum (strain C58 / ATCC 33970) (Agrobacterium tumefaciens (strain C58)).